Consider the following 389-residue polypeptide: Nucleic acid dioxygenase ALKBH1 (389 aa).

Residues 1-127 (MGKMAAAVAS…CLKLYSQKPN (127 aa)) are interaction with DNAJB6. A tRNA-binding region spans residues 86–389 (SKWRAYGLEG…VKRKRLNPNS (304 aa)). Substrate is bound by residues W144 and 175-177 (YHY). The 135-residue stretch at 213-347 (QAEAGILNYY…RVNMTVRQVL (135 aa)) folds into the Fe2OG dioxygenase domain. 220-222 (NYY) lines the 2-oxoglutarate pocket. Residues H231, D233, and H287 each contribute to the Fe cation site. Position 233 (D233) interacts with substrate. 338-344 (RVNMTVR) serves as a coordination point for 2-oxoglutarate.

Monomer. Interacts with DNAJB6. The cofactor is Fe(2+). As to expression, in adult organs, highly expressed in testis, eye, brain and kidney.

Its subcellular location is the nucleus. It carries out the reaction an N(6)-methyl-2'-deoxyadenosine in DNA + 2-oxoglutarate + O2 = a 2'-deoxyadenosine in DNA + formaldehyde + succinate + CO2. It catalyses the reaction 2'-deoxyribonucleotide-(2'-deoxyribose 5'-phosphate)-2'-deoxyribonucleotide-DNA = a 3'-end 2'-deoxyribonucleotide-(2,3-dehydro-2,3-deoxyribose 5'-phosphate)-DNA + a 5'-end 5'-phospho-2'-deoxyribonucleoside-DNA + H(+). The catalysed reaction is a methylated nucleobase within DNA + 2-oxoglutarate + O2 = a nucleobase within DNA + formaldehyde + succinate + CO2. The enzyme catalyses an N(1)-methyladenosine in tRNA + 2-oxoglutarate + O2 = an adenosine in tRNA + formaldehyde + succinate + CO2. It carries out the reaction 5-methylcytidine(34) in mitochondrial tRNA(Met) + 2 2-oxoglutarate + 2 O2 = 5-formylcytidine(34) in mitochondrial tRNA(Met) + 2 succinate + 2 CO2 + H2O. It catalyses the reaction an N(3)-methylcytidine in mRNA + 2-oxoglutarate + O2 = a cytidine in mRNA + formaldehyde + succinate + CO2. The catalysed reaction is N(1)-methyladenosine(58) in tRNA + 2-oxoglutarate + O2 = adenosine(58) in tRNA + formaldehyde + succinate + CO2. In terms of biological role, dioxygenase that acts on nucleic acids, such as DNA and tRNA. Requires molecular oxygen, alpha-ketoglutarate and iron. A number of activities have been described for this dioxygenase, but recent results suggest that it mainly acts on tRNAs and mediates their demethylation or oxidation depending on the context and subcellular compartment. Mainly acts as a tRNA demethylase by removing N(1)-methyladenine from various tRNAs, with a preference for N(1)-methyladenine at position 58 (m1A58) present on a stem loop structure of tRNAs. Acts as a regulator of translation initiation and elongation in response to glucose deprivation: regulates both translation initiation, by mediating demethylation of tRNA(Met), and translation elongation, N(1)-methyladenine-containing tRNAs being preferentially recruited to polysomes to promote translation elongation. In mitochondrion, specifically interacts with mt-tRNA(Met) and mediates oxidation of mt-tRNA(Met) methylated at cytosine(34) to form 5-formylcytosine (f(5)c) at this position. mt-tRNA(Met) containing the f(5)c modification at the wobble position enables recognition of the AUA codon in addition to the AUG codon, expanding codon recognition in mitochondrial translation. Specifically demethylates DNA methylated on the 6th position of adenine (N(6)-methyladenosine) DNA. N(6)-methyladenosine (m6A) DNA is present at some L1 elements in embryonic stem cells and probably promotes their silencing. Demethylates mRNAs containing N(3)-methylcytidine modification. Also able to repair alkylated single-stranded DNA by oxidative demethylation, but with low activity. Also has DNA lyase activity and introduces double-stranded breaks at abasic sites: cleaves both single-stranded DNA and double-stranded DNA at abasic sites, with the greatest activity towards double-stranded DNA with two abasic sites. DNA lyase activity does not require alpha-ketoglutarate and iron and leads to the formation of an irreversible covalent protein-DNA adduct with the 5' DNA product. DNA lyase activity is not required during base excision repair and class switch recombination of the immunoglobulin heavy chain during B lymphocyte activation. May play a role in placental trophoblast lineage differentiation. This chain is Nucleic acid dioxygenase ALKBH1, found in Mus musculus (Mouse).